Reading from the N-terminus, the 1556-residue chain is Ras guanine nucleotide exchange factor G (1556 aa).

4 disordered regions span residues Ile-19 to Gly-63, Leu-93 to Thr-141, Ser-163 to Ser-239, and Ala-254 to Ser-296. Low complexity-rich tracts occupy residues Asn-25 to Asn-54 and Asn-96 to Thr-141. A compositionally biased stretch (acidic residues) spans Asp-170–Ser-186. The segment covering Thr-196 to Ser-216 has biased composition (low complexity). Positions Asp-256–Val-271 are enriched in polar residues. Residues Asp-279–Asn-295 show a composition bias toward low complexity. In terms of domain architecture, F-box 1 spans Asn-307 to Leu-353. The segment at Asn-385–Asn-416 is disordered. Residues Val-679–Leu-726 form the F-box 2 domain. 2 disordered regions span residues Gln-762–Asn-815 and Gly-827–Asn-1101. The segment covering Gly-827–Gly-848 has biased composition (low complexity). Residues Ser-849 to Ser-866 show a composition bias toward gly residues. 2 stretches are compositionally biased toward low complexity: residues Asn-867–Ser-880 and Phe-888–Thr-910. The segment covering Asn-911–Val-935 has biased composition (polar residues). Low complexity-rich tracts occupy residues Ser-943–Ser-957 and Pro-972–Ile-1053. The span at Val-1059–Ala-1076 shows a compositional bias: polar residues. Over residues Asn-1077 to Asn-1101 the composition is skewed to low complexity. The N-terminal Ras-GEF domain maps to Met-1116–Ser-1244. Residues Ile-1254 to Gly-1279 form a disordered region. Residues Lys-1264–Gly-1279 are compositionally biased toward gly residues. The 232-residue stretch at Pro-1317–Arg-1548 folds into the Ras-GEF domain.

Functionally, promotes the exchange of Ras-bound GDP by GTP. The polypeptide is Ras guanine nucleotide exchange factor G (gefG) (Dictyostelium discoideum (Social amoeba)).